Consider the following 520-residue polypeptide: MLLVDVATASVDVGAMSSRLAKTARIADLLSRAGTEQDARLVAVTVAWLSGELPQRQIGVGWAALRSLPAPAAAPTLTVTAVDAVFSEIGAVAGKGSQARRAGLIAELFAAATDVEQTFLRRLLTGELRQGALIGVMADAVAKAADVPAARVRRAAMLAGDLPAVAAAVLAGGDAALARFTLQVGRPVGPMLAQTATGVADALDRLGGTAVFEAKLDGARVQIHRRGSDVSVYTRSLDDVTARLPEVVEAALALPVTDLIADAEAIALRPDGRPHRFQVTASRFGRAAARATQPLSVFMFDLLHVDGADLLDQPTSDRVRVLDDLVPAAHRVDRLVTDDGAAAQRFLEATLAAGHEGVMAKSPNAPYEAGRRGAGWLKVKPVHTLDLVVLAVEWGSGRRTGKLSNIHLGARDPATGGFVMLGKTFKGMTDAMLDWQTARFLELADPAAQPATSGRDPTDGHTVKVRPEQVVEIAFDGVQGSTRYPGGMALRFARVLRYRDDKSPAEADTVDTVRAFYEHG.

E213 serves as a coordination point for ATP. K215 serves as the catalytic N6-AMP-lysine intermediate. ATP-binding residues include R220, R235, E264, F300, R372, and K378.

This sequence belongs to the ATP-dependent DNA ligase family. The cofactor is Mg(2+).

The catalysed reaction is ATP + (deoxyribonucleotide)n-3'-hydroxyl + 5'-phospho-(deoxyribonucleotide)m = (deoxyribonucleotide)n+m + AMP + diphosphate.. Functionally, DNA ligase that seals nicks in double-stranded DNA during DNA replication, DNA recombination and DNA repair. This Mycobacterium sp. (strain JLS) protein is Probable DNA ligase.